The following is a 288-amino-acid chain: 4-diphosphocytidyl-2-C-methyl-D-erythritol kinase (288 aa).

Lys8 is an active-site residue. 92 to 102 (PVAAGMAGGST) contacts ATP. Residue Asp134 is part of the active site.

It belongs to the GHMP kinase family. IspE subfamily.

It catalyses the reaction 4-CDP-2-C-methyl-D-erythritol + ATP = 4-CDP-2-C-methyl-D-erythritol 2-phosphate + ADP + H(+). The protein operates within isoprenoid biosynthesis; isopentenyl diphosphate biosynthesis via DXP pathway; isopentenyl diphosphate from 1-deoxy-D-xylulose 5-phosphate: step 3/6. Its function is as follows. Catalyzes the phosphorylation of the position 2 hydroxy group of 4-diphosphocytidyl-2C-methyl-D-erythritol. This is 4-diphosphocytidyl-2-C-methyl-D-erythritol kinase from Clostridium perfringens (strain SM101 / Type A).